The sequence spans 193 residues: MANLRTQKRLAASVLKCGKRKVWMDPNEISEISNANSRQNVRKLIKDGLVIRKPNLMHSRFRIRKTHAAKRLGRHTGYGKRKGTAEARMPSAVVWMRRQRVLRRLLRKYRESGKIDKHLYHTLYLEAKGNTFKHKRALIEHIQRAKAEANRTKLIQEQQDARRARAKAARQRRAKAVEEKREQLYTAAEKIEE.

Positions 156 to 179 are disordered; that stretch reads QEQQDARRARAKAARQRRAKAVEE. Over residues 164–174 the composition is skewed to basic residues; the sequence is ARAKAARQRRA.

Belongs to the eukaryotic ribosomal protein eL19 family. As to quaternary structure, component of the large ribosomal subunit (LSU). Mature yeast ribosomes consist of a small (40S) and a large (60S) subunit. The 40S small subunit contains 1 molecule of ribosomal RNA (18S rRNA) and at least 33 different proteins. The large 60S subunit contains 3 rRNA molecules (25S, 5.8S and 5S rRNA) and at least 46 different proteins. eL19 lies in close proximity to the binding site for eukaryotic initiation factor eIF4G.

The protein localises to the cytoplasm. Component of the ribosome, a large ribonucleoprotein complex responsible for the synthesis of proteins in the cell. The small ribosomal subunit (SSU) binds messenger RNAs (mRNAs) and translates the encoded message by selecting cognate aminoacyl-transfer RNA (tRNA) molecules. The large subunit (LSU) contains the ribosomal catalytic site termed the peptidyl transferase center (PTC), which catalyzes the formation of peptide bonds, thereby polymerizing the amino acids delivered by tRNAs into a polypeptide chain. The nascent polypeptides leave the ribosome through a tunnel in the LSU and interact with protein factors that function in enzymatic processing, targeting, and the membrane insertion of nascent chains at the exit of the ribosomal tunnel. eL19 may play a role in the last stages of translation initiation, in particular subunit joining and shedding/releasing factors. The protein is Large ribosomal subunit protein eL19A (rpl1901) of Schizosaccharomyces pombe (strain 972 / ATCC 24843) (Fission yeast).